A 65-amino-acid polypeptide reads, in one-letter code: Alpha-toxin Bs-Tx28 (65 aa).

Residues 3–65 (RDAYIADDKN…VPIRIPGKCR (63 aa)) enclose the LCN-type CS-alpha/beta domain. 4 disulfide bridges follow: C13-C64, C17-C37, C23-C47, and C27-C49. An Arginine amide modification is found at R65.

It belongs to the long (4 C-C) scorpion toxin superfamily. Sodium channel inhibitor family. Alpha subfamily. As to expression, expressed by the venom gland.

The protein resides in the secreted. Functionally, alpha toxins bind voltage-independently at site-3 of sodium channels (Nav) and inhibit the inactivation of the activated channels, thereby blocking neuronal transmission. This toxin inhibits the inactivation of activated TTX-sensitive sodium channels (Nav). The protein is Alpha-toxin Bs-Tx28 of Hottentotta tamulus sindicus (Scorpion).